A 447-amino-acid chain; its full sequence is Argininosuccinate synthase (447 aa).

Residues 20–28 (AFSGGLDTS) and Ala-46 each bind ATP. Tyr-102 lines the L-citrulline pocket. 2 residues coordinate ATP: Gly-132 and Thr-134. L-aspartate-binding residues include Thr-134, Asn-138, and Asp-139. Asn-138 contributes to the L-citrulline binding site. ATP is bound at residue Asp-139. 2 residues coordinate L-citrulline: Arg-142 and Ser-195. Asp-197 is an ATP binding site. L-citrulline is bound by residues Thr-204, Glu-206, and Glu-283.

The protein belongs to the argininosuccinate synthase family. Type 2 subfamily. As to quaternary structure, homotetramer.

It is found in the cytoplasm. It catalyses the reaction L-citrulline + L-aspartate + ATP = 2-(N(omega)-L-arginino)succinate + AMP + diphosphate + H(+). Its pathway is amino-acid biosynthesis; L-arginine biosynthesis; L-arginine from L-ornithine and carbamoyl phosphate: step 2/3. The sequence is that of Argininosuccinate synthase from Neisseria gonorrhoeae (strain ATCC 700825 / FA 1090).